The chain runs to 656 residues: Solute carrier family 5 member 4A (656 aa).

Topologically, residues 1–28 (MASTASVSTSTASSELSSLSNNINNAAD) are cytoplasmic. The helical transmembrane segment at 29 to 47 (ISVIVIYFVVVMAVGVWAM) threads the bilayer. Residues 48 to 64 (LKTNRSTVGGFFLAGRS) lie on the Extracellular side of the membrane. The chain crosses the membrane as a helical span at residues 65–85 (MTWWPMGASLFASNIGSGHFV). Residues 86–105 (GLAGTGAASGIAVTAFESHS) lie on the Cytoplasmic side of the membrane. A helical transmembrane segment spans residues 106–126 (FALLLVLGWIFVPIYIKAGVM). The Extracellular portion of the chain corresponds to 127-171 (TMPEYLKKRFGGKRLQIYLSILFLFICVILTISADIFSGAIFIKL). Residues 172–191 (ALGLNLYLAILILLAITAIF) form a helical membrane-spanning segment. At 192–208 (TITGGLASVIYTDTVQA) the chain is on the cytoplasmic side. The helical transmembrane segment at 209–229 (VIMLVGSFILMVFAFVEVGGY) threads the bilayer. Topologically, residues 230–270 (ESFTEKFMNAIPSVVEGDNLTINSRCYTPQPDSFHIFRDPV) are extracellular. N-linked (GlcNAc...) asparagine glycosylation occurs at asparagine 248. Residues 271-291 (TGDIPWPGTAFGMPITALWYW) form a helical membrane-spanning segment. Residues 292–314 (CINQVIVQRCLCGKNLSHVKAAC) are Cytoplasmic-facing. The chain crosses the membrane as a helical span at residues 315–334 (ILCGYLKLLPLFFMVMPGMI). The Extracellular segment spans residues 335 to 423 (SRILYTDMVA…RKKASERELL (89 aa)). A helical membrane pass occupies residues 424–443 (IAGRLFVSVLIVTSILWVPI). Topologically, residues 444–455 (VEVSQGGQLVHY) are cytoplasmic. The helical transmembrane segment at 456-476 (TEAISSYLGPPIAAVFLVAVF) threads the bilayer. Residues 477–526 (CKRANEQGAFWGLMVGLVMGLIRMIAEFSYGTGSCLAPSSCPKIICGVHY) lie on the Extracellular side of the membrane. Residues 527–547 (LYFAIILFFVCILVILGVSYL) traverse the membrane as a helical segment. The Cytoplasmic segment spans residues 548-634 (TKPIPDVHLH…TDTTEKPFWR (87 aa)). A disordered region spans residues 574 to 593 (DAEDKEENGADDRTEEDQTE). A helical membrane pass occupies residues 635–655 (TVMNVNVILLLAVAAFFYGYF).

This sequence belongs to the sodium:solute symporter (SSF) (TC 2.A.21) family. Expressed in small intestine. Expressed in kidney.

The protein localises to the cell membrane. Its activity is regulated as follows. Not inhibited by phlorizin. Its function is as follows. Does not function as sodium/D-glucose symporter. Generates D-glucose-induced depolarization in a pH-dependent manner, with activity in acidic conditions (pH 5) but not neutral conditions. In Mus musculus (Mouse), this protein is Solute carrier family 5 member 4A.